The primary structure comprises 294 residues: tRNA pseudouridine synthase B (294 aa).

The active-site Nucleophile is the D39.

It belongs to the pseudouridine synthase TruB family. Type 1 subfamily.

It carries out the reaction uridine(55) in tRNA = pseudouridine(55) in tRNA. Its function is as follows. Responsible for synthesis of pseudouridine from uracil-55 in the psi GC loop of transfer RNAs. This is tRNA pseudouridine synthase B from Streptococcus pyogenes serotype M5 (strain Manfredo).